A 628-amino-acid polypeptide reads, in one-letter code: Nucleoside-triphosphatase 2 (628 aa).

Positions 1-25 (MWLPVYVPLLLVFGVSLSLPHGSLG) are cleaved as a signal peptide. Glutamate 236 (proton acceptor) is an active-site residue. Asparagine 432 is a glycosylation site (N-linked (GlcNAc...) asparagine).

The protein belongs to the GDA1/CD39 NTPase family. As to quaternary structure, homotetramer.

It is found in the secreted. The protein resides in the parasitophorous vacuole. It carries out the reaction a ribonucleoside 5'-triphosphate + H2O = a ribonucleoside 5'-diphosphate + phosphate + H(+). May perform an important processing step in the conversion of high energy nucleotides prior to uptake by the parasite. NTPAse-II has a specific activity 4.5-fold lower than NTPAse-I in hydrolysis of ATP. The primary difference between these isozymes lies in their ability to hydrolyze nucleoside triphosphate versus diphosphate substrates. While NTPAse-II hydrolyzes ATP to ADP and ADP to AMP at almost the same rate, NTPAse-I hydrolyzes ADP to AMP at a much slower rate (0.7% of the rate for ATP). This Toxoplasma gondii protein is Nucleoside-triphosphatase 2 (NTP1).